Reading from the N-terminus, the 683-residue chain is Methionine--tRNA ligase (683 aa).

Positions 15 to 25 match the 'HIGH' region motif; sequence PYANGSIHLGH. Zn(2+)-binding residues include C146, C149, C159, and C162. The 'KMSKS' region signature appears at 332 to 336; that stretch reads KMSKS. K335 provides a ligand contact to ATP. Residues 582 to 683 enclose the tRNA-binding domain; it reads DFAKVDLRIA…QGAQAGMRVM (102 aa).

It belongs to the class-I aminoacyl-tRNA synthetase family. MetG type 1 subfamily. Homodimer. Zn(2+) serves as cofactor.

It localises to the cytoplasm. It carries out the reaction tRNA(Met) + L-methionine + ATP = L-methionyl-tRNA(Met) + AMP + diphosphate. Its function is as follows. Is required not only for elongation of protein synthesis but also for the initiation of all mRNA translation through initiator tRNA(fMet) aminoacylation. This Vibrio cholerae serotype O1 (strain ATCC 39541 / Classical Ogawa 395 / O395) protein is Methionine--tRNA ligase.